A 343-amino-acid polypeptide reads, in one-letter code: GTPase Obg (343 aa).

One can recognise an Obg domain in the interval 1–159 (MKFLDQAKIY…RWVWLRLKLI (159 aa)). Residues 160-328 (ADAGLVGLPN…LLRQVMTYVA (169 aa)) enclose the OBG-type G domain. GTP contacts are provided by residues 166-173 (GLPNAGKS), 191-195 (FTTLH), 213-216 (DIPG), 280-283 (NKCD), and 309-311 (SGV). Ser-173 and Thr-193 together coordinate Mg(2+).

It belongs to the TRAFAC class OBG-HflX-like GTPase superfamily. OBG GTPase family. As to quaternary structure, monomer. Mg(2+) is required as a cofactor.

It localises to the cytoplasm. Functionally, an essential GTPase which binds GTP, GDP and possibly (p)ppGpp with moderate affinity, with high nucleotide exchange rates and a fairly low GTP hydrolysis rate. Plays a role in control of the cell cycle, stress response, ribosome biogenesis and in those bacteria that undergo differentiation, in morphogenesis control. This is GTPase Obg from Granulibacter bethesdensis (strain ATCC BAA-1260 / CGDNIH1).